The primary structure comprises 249 residues: MKIVVTNDDGPHSPLLEPLVRGLEAVGNEVVVVVPERPRSAAGLARTYHKPLRVRRLGGYYVVNGFPADAVFLALKLIAPDAELVISGVNVGENIGIEATYGSGTVGAALQAGVLGVPSIAASMEVGGDVDFMIKVVEGAVASARAGLDGVLAVSINIPSVWKGGVYCVRKLARAVYRERLYEGVDPRGEKYYWRWGPRRSEFEPDTDAYYFYYMRGVTVLGLSESGVASVENFGRKLGQLIGAVKVDC.

Residues D8, D9, S40, and N90 each coordinate a divalent metal cation.

It belongs to the SurE nucleotidase family. A divalent metal cation is required as a cofactor.

The protein resides in the cytoplasm. The enzyme catalyses a ribonucleoside 5'-phosphate + H2O = a ribonucleoside + phosphate. Nucleotidase that shows phosphatase activity on nucleoside 5'-monophosphates. The protein is 5'-nucleotidase SurE 2 of Pyrobaculum aerophilum (strain ATCC 51768 / DSM 7523 / JCM 9630 / CIP 104966 / NBRC 100827 / IM2).